A 466-amino-acid polypeptide reads, in one-letter code: 3-isopropylmalate dehydratase large subunit (466 aa).

[4Fe-4S] cluster is bound by residues cysteine 347, cysteine 407, and cysteine 410.

It belongs to the aconitase/IPM isomerase family. LeuC type 1 subfamily. In terms of assembly, heterodimer of LeuC and LeuD. Requires [4Fe-4S] cluster as cofactor.

It carries out the reaction (2R,3S)-3-isopropylmalate = (2S)-2-isopropylmalate. The protein operates within amino-acid biosynthesis; L-leucine biosynthesis; L-leucine from 3-methyl-2-oxobutanoate: step 2/4. Functionally, catalyzes the isomerization between 2-isopropylmalate and 3-isopropylmalate, via the formation of 2-isopropylmaleate. This Blochmanniella pennsylvanica (strain BPEN) protein is 3-isopropylmalate dehydratase large subunit.